The chain runs to 1356 residues: DNA-directed RNA polymerase subunit beta (1356 aa).

Belongs to the RNA polymerase beta chain family. The RNAP catalytic core consists of 2 alpha, 1 beta, 1 beta' and 1 omega subunit. When a sigma factor is associated with the core the holoenzyme is formed, which can initiate transcription.

The catalysed reaction is RNA(n) + a ribonucleoside 5'-triphosphate = RNA(n+1) + diphosphate. In terms of biological role, DNA-dependent RNA polymerase catalyzes the transcription of DNA into RNA using the four ribonucleoside triphosphates as substrates. The polypeptide is DNA-directed RNA polymerase subunit beta (Phenylobacterium zucineum (strain HLK1)).